Reading from the N-terminus, the 536-residue chain is Hydroxylamine oxidoreductase (536 aa).

Positions 1-26 (MFEIFKKPLSRIVGATFAFAGVTLLA) are cleaved as a signal peptide. Residues Cys116, Cys119, His120, His136, Cys160, Cys163, His164, His168, Cys179, Cys182, His183, His198, Cys223, Cys226, His227, Cys234, Cys237, His238, His241, Cys254, Cys257, and His258 each contribute to the heme c site. His263 serves as a coordination point for hydroxylamine. Residues His274, Cys301, Cys304, His305, His311, Cys346, Cys349, His350, His443, and Tyr451 each contribute to the heme c site.

In terms of assembly, homotrimer; subunits are linked by two covalent bonds between Tyr-451 of one subunit and heme P460 of an adjacent subunit. Heme c is required as a cofactor.

It is found in the anammoxosome. It catalyses the reaction hydroxylamine + 3 Fe(III)-[cytochrome c] = nitric oxide + 3 Fe(II)-[cytochrome c] + 3 H(+). Its function is as follows. Catalyzes the oxidation of hydroxylamine to nitric oxide with cytochrome c acting as an electron acceptor. Does not oxidize hydroxylamine to nitrite. Also able to catalyze the four-electron oxidation of hydrazine to N(2) in vitro with reduced efficiency; however, this reaction is probably not physiological. In Kuenenia stuttgartiensis, this protein is Hydroxylamine oxidoreductase.